A 125-amino-acid chain; its full sequence is Large-conductance mechanosensitive channel (125 aa).

Helical transmembrane passes span 19–39 (VGVI…KYII), 42–62 (FLGL…IGNA), and 66–86 (VGSF…VFLM).

The protein belongs to the MscL family. Homopentamer.

Its subcellular location is the cell membrane. In terms of biological role, channel that opens in response to stretch forces in the membrane lipid bilayer. May participate in the regulation of osmotic pressure changes within the cell. This Ligilactobacillus salivarius (strain UCC118) (Lactobacillus salivarius) protein is Large-conductance mechanosensitive channel.